The sequence spans 466 residues: Carboxy-terminal processing protease CtpA (466 aa).

The first 36 residues, 1-36, serve as a signal peptide directing secretion; that stretch reads MKRQLKLFFIVLITAVVASALTLFITGNSSILGQKS. The PDZ domain maps to 96-174; it reads DETISASFEG…TKVKLELNRA (79 aa). Catalysis depends on charge relay system residues serine 297, glutamate 308, and lysine 322.

This sequence belongs to the peptidase S41A family.

It catalyses the reaction The enzyme shows specific recognition of a C-terminal tripeptide, Xaa-Yaa-Zaa, in which Xaa is preferably Ala or Leu, Yaa is preferably Ala or Tyr, and Zaa is preferably Ala, but then cleaves at a variable distance from the C-terminus. A typical cleavage is -Ala-Ala-|-Arg-Ala-Ala-Lys-Glu-Asn-Tyr-Ala-Leu-Ala-Ala.. The chain is Carboxy-terminal processing protease CtpA (ctpA) from Bacillus subtilis (strain 168).